The chain runs to 334 residues: Tryptophan--tRNA ligase (334 aa).

ATP is bound by residues 11-13 (QPS) and 19-20 (GN). Residues 12–20 (PSGELTIGN) carry the 'HIGH' region motif. Asp-135 is a binding site for L-tryptophan. ATP is bound by residues 147–149 (GED), Val-186, and 195–199 (KMSKS). Residues 195-199 (KMSKS) carry the 'KMSKS' region motif.

It belongs to the class-I aminoacyl-tRNA synthetase family. In terms of assembly, homodimer.

It is found in the cytoplasm. It carries out the reaction tRNA(Trp) + L-tryptophan + ATP = L-tryptophyl-tRNA(Trp) + AMP + diphosphate + H(+). Functionally, catalyzes the attachment of tryptophan to tRNA(Trp). The protein is Tryptophan--tRNA ligase of Shigella flexneri.